The sequence spans 331 residues: CRISPR-associated endonuclease Cas1 (331 aa).

The Mn(2+) site is built by glutamate 155, histidine 221, and glutamate 236.

Belongs to the CRISPR-associated endonuclease Cas1 family. As to quaternary structure, homodimer, forms a heterotetramer with a Cas2 homodimer. Mg(2+) is required as a cofactor. Mn(2+) serves as cofactor.

Its function is as follows. CRISPR (clustered regularly interspaced short palindromic repeat), is an adaptive immune system that provides protection against mobile genetic elements (viruses, transposable elements and conjugative plasmids). CRISPR clusters contain spacers, sequences complementary to antecedent mobile elements, and target invading nucleic acids. CRISPR clusters are transcribed and processed into CRISPR RNA (crRNA). Acts as a dsDNA endonuclease. Involved in the integration of spacer DNA into the CRISPR cassette. The polypeptide is CRISPR-associated endonuclease Cas1 (Methanopyrus kandleri (strain AV19 / DSM 6324 / JCM 9639 / NBRC 100938)).